A 105-amino-acid chain; its full sequence is METKRLAYVMFVLVCLFLAMAQPSQASYFSAWAGPGCNNHNARYSKCGCSNIGHNVHGGYEFVYQGQTAAAYNTDNCKGVAQTRFSSSVNQACSNFGWKSVFIQC.

A signal peptide spans 1 to 26 (METKRLAYVMFVLVCLFLAMAQPSQA). Intrachain disulfides connect C37–C93, C47–C105, and C49–C77.

Detected at higher levels in needles and twigs from canker-resistant seedlings than in needles from canker-susceptible plants. During summer, detected on cankered, healthy and marginal bark. During winter, detected at lower levels in cankered bark and bark from the canker margin than in healthy bark (at protein level).

It is found in the secreted. It localises to the cell wall. Its function is as follows. Antimicrobial peptide. The polypeptide is Antimicrobial peptide 1 (Pinus monticola (Western white pine)).